Here is a 62-residue protein sequence, read N- to C-terminus: Large ribosomal subunit protein uL29 (62 aa).

It belongs to the universal ribosomal protein uL29 family.

The protein is Large ribosomal subunit protein uL29 of Acholeplasma laidlawii (strain PG-8A).